The primary structure comprises 305 residues: Auxin-responsive protein IAA27 (305 aa).

The short motif at 45–49 (LRLGL) is the EAR-like (transcriptional repression) element. 2 disordered regions span residues 96-119 (TTAT…GKST) and 155-180 (KNSM…AKSG). Residues 155–170 (KNSMASSQSQKPGNNS) are compositionally biased toward polar residues. Residues 185-287 (CLYVKVSMEG…SCKKLRIMKS (103 aa)) enclose the PB1 domain.

This sequence belongs to the Aux/IAA family. In terms of assembly, homodimers and heterodimers. Interacts with phytochrome A. Interacts with TPL.

The protein localises to the nucleus. Functionally, aux/IAA proteins are short-lived transcriptional factors that function as repressors of early auxin response genes at low auxin concentrations. Repression is thought to result from the interaction with auxin response factors (ARFs), proteins that bind to the auxin-responsive promoter element (AuxRE). Formation of heterodimers with ARF proteins may alter their ability to modulate early auxin response genes expression. The protein is Auxin-responsive protein IAA27 (IAA27) of Arabidopsis thaliana (Mouse-ear cress).